A 217-amino-acid chain; its full sequence is Adenylate kinase (217 aa).

ATP is bound at residue 10–15 (GAGKGT). Residues 30-59 (STGDMFRAAMKEETQLGLEAKSFIDKGELV) form an NMP region. AMP is bound by residues threonine 31, arginine 36, 57-59 (ELV), 85-88 (GFPR), and glutamine 92. Residues 126–163 (GRRICKNCGATYHLVFNPPAKENVCDKCGGELYQRADD) are LID. Residue arginine 127 coordinates ATP. Cysteine 130 and cysteine 133 together coordinate Zn(2+). 136–137 (TY) lines the ATP pocket. Zn(2+)-binding residues include cysteine 150 and cysteine 153. AMP-binding residues include arginine 160 and arginine 171. Lysine 199 serves as a coordination point for ATP.

It belongs to the adenylate kinase family. Monomer.

The protein localises to the cytoplasm. The enzyme catalyses AMP + ATP = 2 ADP. Its pathway is purine metabolism; AMP biosynthesis via salvage pathway; AMP from ADP: step 1/1. Its function is as follows. Catalyzes the reversible transfer of the terminal phosphate group between ATP and AMP. Plays an important role in cellular energy homeostasis and in adenine nucleotide metabolism. This Bacillus pumilus (strain SAFR-032) protein is Adenylate kinase.